A 432-amino-acid chain; its full sequence is Glutamate-1-semialdehyde 2,1-aminomutase (432 aa).

Lys-266 carries the N6-(pyridoxal phosphate)lysine modification.

It belongs to the class-III pyridoxal-phosphate-dependent aminotransferase family. HemL subfamily. In terms of assembly, homodimer. Pyridoxal 5'-phosphate serves as cofactor.

It is found in the cytoplasm. It carries out the reaction (S)-4-amino-5-oxopentanoate = 5-aminolevulinate. Its pathway is porphyrin-containing compound metabolism; protoporphyrin-IX biosynthesis; 5-aminolevulinate from L-glutamyl-tRNA(Glu): step 2/2. This chain is Glutamate-1-semialdehyde 2,1-aminomutase, found in Janthinobacterium sp. (strain Marseille) (Minibacterium massiliensis).